Reading from the N-terminus, the 314-residue chain is tRNA dimethylallyltransferase (314 aa).

Residue 13–20 (GPTASGKS) participates in ATP binding. 15 to 20 (TASGKS) contributes to the substrate binding site. 2 interaction with substrate tRNA regions span residues 38–41 (DSMQ) and 161–165 (QRIAR).

The protein belongs to the IPP transferase family. Monomer. It depends on Mg(2+) as a cofactor.

The enzyme catalyses adenosine(37) in tRNA + dimethylallyl diphosphate = N(6)-dimethylallyladenosine(37) in tRNA + diphosphate. Its function is as follows. Catalyzes the transfer of a dimethylallyl group onto the adenine at position 37 in tRNAs that read codons beginning with uridine, leading to the formation of N6-(dimethylallyl)adenosine (i(6)A). The chain is tRNA dimethylallyltransferase from Parvibaculum lavamentivorans (strain DS-1 / DSM 13023 / NCIMB 13966).